Consider the following 264-residue polypeptide: Thymidylate synthase (264 aa).

Arg-21 contacts dUMP. Residue His-51 participates in (6R)-5,10-methylene-5,6,7,8-tetrahydrofolate binding. 126–127 (RR) is a dUMP binding site. Catalysis depends on Cys-146, which acts as the Nucleophile. DUMP-binding positions include 166-169 (RSAD), Asn-177, and 207-209 (HIY). Asp-169 serves as a coordination point for (6R)-5,10-methylene-5,6,7,8-tetrahydrofolate. Ser-263 contributes to the (6R)-5,10-methylene-5,6,7,8-tetrahydrofolate binding site.

The protein belongs to the thymidylate synthase family. Bacterial-type ThyA subfamily. As to quaternary structure, homodimer.

Its subcellular location is the cytoplasm. It carries out the reaction dUMP + (6R)-5,10-methylene-5,6,7,8-tetrahydrofolate = 7,8-dihydrofolate + dTMP. It participates in pyrimidine metabolism; dTTP biosynthesis. Catalyzes the reductive methylation of 2'-deoxyuridine-5'-monophosphate (dUMP) to 2'-deoxythymidine-5'-monophosphate (dTMP) while utilizing 5,10-methylenetetrahydrofolate (mTHF) as the methyl donor and reductant in the reaction, yielding dihydrofolate (DHF) as a by-product. This enzymatic reaction provides an intracellular de novo source of dTMP, an essential precursor for DNA biosynthesis. The chain is Thymidylate synthase from Phocaeicola vulgatus (strain ATCC 8482 / DSM 1447 / JCM 5826 / CCUG 4940 / NBRC 14291 / NCTC 11154) (Bacteroides vulgatus).